We begin with the raw amino-acid sequence, 92 residues long: UPF0213 protein M28_Spy1146 (92 aa).

Positions 4–80 (KKAYMYVLEC…KRKTRSQKLA (77 aa)) constitute a GIY-YIG domain.

Belongs to the UPF0213 family.

This chain is UPF0213 protein M28_Spy1146, found in Streptococcus pyogenes serotype M28 (strain MGAS6180).